The chain runs to 240 residues: Putative exosome complex component RRP41 (240 aa).

The protein belongs to the RNase PH family. As to quaternary structure, component of the RNA exosome complex.

The protein resides in the cytoplasm. The protein localises to the nucleus. It localises to the nucleolus. It is found in the nucleoplasm. Functionally, non-catalytic component of the RNA exosome complex which has 3'-&gt;5' exoribonuclease activity and participates in a multitude of cellular RNA processing and degradation events. The sequence is that of Putative exosome complex component RRP41 (exos-4.1) from Caenorhabditis briggsae.